A 313-amino-acid chain; its full sequence is GTPase Era (313 aa).

Residues 20–187 (RSGFVALIGA…MDYLAETLPE (168 aa)) form the Era-type G domain. Residues 28-35 (GATNAGKS) are G1. Residue 28-35 (GATNAGKS) coordinates GTP. A G2 region spans residues 54–58 (QTTRA). Residues 75–78 (DTPG) are G3. GTP-binding positions include 75–79 (DTPGI) and 137–140 (NKVD). The G4 stretch occupies residues 137–140 (NKVD). The G5 stretch occupies residues 166 to 168 (ISA). In terms of domain architecture, KH type-2 spans 218–295 (LHQELPYASH…HLFLFVKVRE (78 aa)).

It belongs to the TRAFAC class TrmE-Era-EngA-EngB-Septin-like GTPase superfamily. Era GTPase family. Monomer.

It is found in the cytoplasm. The protein resides in the cell inner membrane. An essential GTPase that binds both GDP and GTP, with rapid nucleotide exchange. Plays a role in 16S rRNA processing and 30S ribosomal subunit biogenesis and possibly also in cell cycle regulation and energy metabolism. The sequence is that of GTPase Era from Rhizobium meliloti (strain 1021) (Ensifer meliloti).